We begin with the raw amino-acid sequence, 540 residues long: Chaperonin GroEL 3 (540 aa).

Residues 30–33 (TLGP), Lys-51, 87–91 (DGTTT), Gly-415, 479–481 (NAA), and Asp-495 each bind ATP.

The protein belongs to the chaperonin (HSP60) family. Forms a cylinder of 14 subunits composed of two heptameric rings stacked back-to-back. Interacts with the co-chaperonin GroES.

It localises to the cytoplasm. It carries out the reaction ATP + H2O + a folded polypeptide = ADP + phosphate + an unfolded polypeptide.. Its function is as follows. Together with its co-chaperonin GroES, plays an essential role in assisting protein folding. The GroEL-GroES system forms a nano-cage that allows encapsulation of the non-native substrate proteins and provides a physical environment optimized to promote and accelerate protein folding. This Burkholderia ambifaria (strain ATCC BAA-244 / DSM 16087 / CCUG 44356 / LMG 19182 / AMMD) (Burkholderia cepacia (strain AMMD)) protein is Chaperonin GroEL 3.